Here is a 35-residue protein sequence, read N- to C-terminus: 30 kDa neutral phosphatase (35 aa).

Over residues 1-28 the composition is skewed to polar residues; sequence KSSAEVQQTQQASIPASQKANLGNQNNI. A disordered region spans residues 1 to 35; that stretch reads KSSAEVQQTQQASIPASQKANLGNQNNIMXVAXYQ.

Highly cationic enzyme that can bind human or rat immunoglobulins as well as serum albumin, and could therefore be involved in post-infectious sequelae. The sequence is that of 30 kDa neutral phosphatase from Staphylococcus aureus.